Consider the following 156-residue polypeptide: Ribosome maturation factor RimP (156 aa).

The protein belongs to the RimP family.

The protein resides in the cytoplasm. Required for maturation of 30S ribosomal subunits. The chain is Ribosome maturation factor RimP from Bacillus cereus (strain G9842).